The chain runs to 261 residues: Imidazole glycerol phosphate synthase subunit HisF (261 aa).

Active-site residues include Asp11 and Asp130.

It belongs to the HisA/HisF family. In terms of assembly, heterodimer of HisH and HisF.

It is found in the cytoplasm. It carries out the reaction 5-[(5-phospho-1-deoxy-D-ribulos-1-ylimino)methylamino]-1-(5-phospho-beta-D-ribosyl)imidazole-4-carboxamide + L-glutamine = D-erythro-1-(imidazol-4-yl)glycerol 3-phosphate + 5-amino-1-(5-phospho-beta-D-ribosyl)imidazole-4-carboxamide + L-glutamate + H(+). It participates in amino-acid biosynthesis; L-histidine biosynthesis; L-histidine from 5-phospho-alpha-D-ribose 1-diphosphate: step 5/9. IGPS catalyzes the conversion of PRFAR and glutamine to IGP, AICAR and glutamate. The HisF subunit catalyzes the cyclization activity that produces IGP and AICAR from PRFAR using the ammonia provided by the HisH subunit. The sequence is that of Imidazole glycerol phosphate synthase subunit HisF from Heliobacterium mobile (Heliobacillus mobilis).